The following is a 256-amino-acid chain: uncharacterized protein (256 aa).

Residues 1 to 22 (MGYLKRIGMCISLLIVIIFVTS) form the signal peptide. Cys-23 carries the N-palmitoyl cysteine lipid modification. Cys-23 carries S-diacylglycerol cysteine lipidation.

Belongs to the staphylococcal tandem lipoprotein family.

The protein localises to the cell membrane. This is an uncharacterized protein from Staphylococcus aureus (strain MSSA476).